The primary structure comprises 420 residues: Gamma-glutamyl phosphate reductase (420 aa).

It belongs to the gamma-glutamyl phosphate reductase family.

It is found in the cytoplasm. It carries out the reaction L-glutamate 5-semialdehyde + phosphate + NADP(+) = L-glutamyl 5-phosphate + NADPH + H(+). Its pathway is amino-acid biosynthesis; L-proline biosynthesis; L-glutamate 5-semialdehyde from L-glutamate: step 2/2. Functionally, catalyzes the NADPH-dependent reduction of L-glutamate 5-phosphate into L-glutamate 5-semialdehyde and phosphate. The product spontaneously undergoes cyclization to form 1-pyrroline-5-carboxylate. The sequence is that of Gamma-glutamyl phosphate reductase from Neisseria meningitidis serogroup A / serotype 4A (strain DSM 15465 / Z2491).